The chain runs to 61 residues: Small ribosomal subunit protein uS14 (61 aa).

Positions 24, 27, 40, and 43 each coordinate Zn(2+).

The protein belongs to the universal ribosomal protein uS14 family. Zinc-binding uS14 subfamily. In terms of assembly, part of the 30S ribosomal subunit. Contacts proteins S3 and S10. Zn(2+) serves as cofactor.

Binds 16S rRNA, required for the assembly of 30S particles and may also be responsible for determining the conformation of the 16S rRNA at the A site. The chain is Small ribosomal subunit protein uS14 from Heliobacterium modesticaldum (strain ATCC 51547 / Ice1).